The following is a 255-amino-acid chain: uncharacterized protein (255 aa).

This sequence belongs to the methyltransferase superfamily.

This is an uncharacterized protein from Mycobacterium ulcerans (strain Agy99).